We begin with the raw amino-acid sequence, 414 residues long: tRNA methyltransferase 10 homolog C (414 aa).

The transit peptide at 1 to 35 (MNVTVRFLRPFARCLVPYTFHRKRSHLYSGVLQRY) directs the protein to the mitochondrion. S79 bears the Phosphoserine mark. A coiled-coil region spans residues 133-171 (GKEKAKKAKQVKKEMKAEAREEAKRARLLETTAEEQQQD). The region spanning 186 to 378 (LGWKGVQAMQ…KFVPRRKHTG (193 aa)) is the SAM-dependent MTase TRM10-type domain.

This sequence belongs to the class IV-like SAM-binding methyltransferase superfamily. TRM10 family. Component of mitochondrial ribonuclease P, a complex composed of TRMT10C/MRPP1, HSD17B10/MRPP2 and PRORP/MRPP3. Interacts with HSD17B10/MRPP2; forming the MRPP1-MRPP2 subcomplex of the mitochondrial ribonuclease P complex. Interacts with GRSF1.

The protein resides in the mitochondrion matrix. The protein localises to the mitochondrion nucleoid. The enzyme catalyses adenosine(9) in tRNA + S-adenosyl-L-methionine = N(1)-methyladenosine(9) in tRNA + S-adenosyl-L-homocysteine + H(+). It catalyses the reaction guanosine(9) in tRNA + S-adenosyl-L-methionine = N(1)-methylguanosine(9) in tRNA + S-adenosyl-L-homocysteine + H(+). It carries out the reaction an adenosine in mRNA + S-adenosyl-L-methionine = an N(1)-methyladenosine in mRNA + S-adenosyl-L-homocysteine + H(+). Functionally, mitochondrial tRNA N(1)-methyltransferase involved in mitochondrial tRNA maturation. Component of mitochondrial ribonuclease P, a complex composed of TRMT10C/MRPP1, HSD17B10/MRPP2 and PRORP/MRPP3, which cleaves tRNA molecules in their 5'-ends. Together with HSD17B10/MRPP2, forms a subcomplex of the mitochondrial ribonuclease P, named MRPP1-MRPP2 subcomplex, which displays functions that are independent of the ribonuclease P activity. The MRPP1-MRPP2 subcomplex catalyzes the formation of N(1)-methylguanine and N(1)-methyladenine at position 9 (m1G9 and m1A9, respectively) in tRNAs; TRMT10C/MRPP1 acting as the catalytic N(1)-methyltransferase subunit. The MRPP1-MRPP2 subcomplex also acts as a tRNA maturation platform: following 5'-end cleavage by the mitochondrial ribonuclease P complex, the MRPP1-MRPP2 subcomplex enhances the efficiency of 3'-processing catalyzed by ELAC2, retains the tRNA product after ELAC2 processing and presents the nascent tRNA to the mitochondrial CCA tRNA nucleotidyltransferase TRNT1 enzyme. In addition to tRNA N(1)-methyltransferase activity, TRMT10C/MRPP1 also acts as a mRNA N(1)-methyltransferase by mediating methylation of adenosine residues at the N(1) position of MT-ND5 mRNA. Associates with mitochondrial DNA complexes at the nucleoids to initiate RNA processing and ribosome assembly. In Mus musculus (Mouse), this protein is tRNA methyltransferase 10 homolog C.